The following is a 1801-amino-acid chain: U3 small nucleolar RNA-associated protein 10 (1801 aa).

2 consecutive transmembrane segments (helical) span residues 102–122 and 136–156; these read LALV…EWLI and ILTF…AILP. The stretch at 581–619 is one HEAT 1 repeat; it reads DVDVQALLPFMLIALADPSERVRSGAVDALANIGKVVDK. A run of 2 helical transmembrane segments spans residues 939–959 and 995–1015; these read IQSG…AIVN and ALLL…HSVM. HEAT repeat units lie at residues 1038–1076, 1110–1148, 1244–1282, 1288–1327, and 1756–1794; these read DQTI…AFEH, YSMD…DSLK, TLTT…QSPE, QTRM…KYGK, and LALL…VLGE.

The protein belongs to the HEATR1/UTP10 family. As to quaternary structure, component of the ribosomal small subunit (SSU) processome.

The protein localises to the nucleus. The protein resides in the nucleolus. It is found in the membrane. Its function is as follows. Involved in nucleolar processing of pre-18S ribosomal RNA. Involved in ribosome biosynthesis. This chain is U3 small nucleolar RNA-associated protein 10, found in Emericella nidulans (strain FGSC A4 / ATCC 38163 / CBS 112.46 / NRRL 194 / M139) (Aspergillus nidulans).